The following is a 157-amino-acid chain: MAKVESFTLDHTKVKAPYVRLITEETGKKGDVISNYDLRLVQPNTNAIPTAGLHTIEHLLAGLLRDRLDGVIDCSPFGCRTGFHLITWGEHSTTEVAKALKGSLDAIANDIEWKDVQGTDKYSCGNYRDHSLFSAKEWSKEILSQGISDQPFERHVI.

Fe cation is bound by residues His54, His58, and Cys124.

This sequence belongs to the LuxS family. Homodimer. The cofactor is Fe cation.

It catalyses the reaction S-(5-deoxy-D-ribos-5-yl)-L-homocysteine = (S)-4,5-dihydroxypentane-2,3-dione + L-homocysteine. Involved in the synthesis of autoinducer 2 (AI-2) which is secreted by bacteria and is used to communicate both the cell density and the metabolic potential of the environment. The regulation of gene expression in response to changes in cell density is called quorum sensing. Catalyzes the transformation of S-ribosylhomocysteine (RHC) to homocysteine (HC) and 4,5-dihydroxy-2,3-pentadione (DPD). This Lactobacillus delbrueckii subsp. bulgaricus (strain ATCC BAA-365 / Lb-18) protein is S-ribosylhomocysteine lyase 2.